Here is a 291-residue protein sequence, read N- to C-terminus: T-cell leukemia homeobox protein 3 (291 aa).

Residues 1–51 are disordered; the sequence is MEAPASAQTPHPHEPISFGIDQILNSPDQDSAPAPRGPDGASYLGGPPGGR. The homeobox DNA-binding region spans 166 to 225; it reads RKKPRTSFSRVQICELEKRFHRQKYLASAERAALAKSLKMTDAQVKTWFQNRRTKWRRQT.

It localises to the nucleus. This Mus musculus (Mouse) protein is T-cell leukemia homeobox protein 3 (Tlx3).